We begin with the raw amino-acid sequence, 58 residues long: Large ribosomal subunit protein bL32c (58 aa).

Belongs to the bacterial ribosomal protein bL32 family.

The protein resides in the plastid. The protein localises to the chloroplast. The chain is Large ribosomal subunit protein bL32c from Chaetosphaeridium globosum (Charophycean green alga).